The chain runs to 910 residues: Seizure 6-like protein 2 (910 aa).

The signal sequence occupies residues 1–27 (MGTPRAQHPPPPQLLFLILLSCPWIQG). The Extracellular segment spans residues 28–844 (LPLKEEEILP…DPSRQLEGGN (817 aa)). The O-glycosylated at one site stretch occupies residues 41-48 (SETPTVAS). Residues 65 to 152 (EMGYLPGSDR…PLGPEGGEEE (88 aa)) form a disordered region. The span at 123 to 145 (LTPPPGTTAPPPPSPASPGPPLG) shows a compositional bias: pro residues. A disulfide bridge connects residues Cys-173 and Cys-202. In terms of domain architecture, CUB 1 spans 173–286 (CNNNISEGEG…GGFRIHYQAY (114 aa)). 3 N-linked (GlcNAc...) asparagine glycosylation sites follow: Asn-176, Asn-222, and Asn-247. Residues 288-347 (LSCGFPPRPAHGDVSVTDLHPGGTATFHCDSGYQLQGEETLICLNGTRPSWNGETPSCMA) enclose the Sushi 1 domain. 6 disulfide bridges follow: Cys-290-Cys-330, Cys-316-Cys-345, Cys-349-Cys-376, Cys-464-Cys-508, Cys-491-Cys-523, and Cys-527-Cys-553. Asn-332, Asn-355, Asn-373, Asn-473, and Asn-517 each carry an N-linked (GlcNAc...) asparagine glycan. One can recognise a CUB 2 domain in the interval 349-459 (CGGTIHNATL…LLLSLRFEAF (111 aa)). A Sushi 2 domain is found at 462–525 (DRCFAPFLAH…WNDTEPACKA (64 aa)). Positions 527–638 (CGGELSEPAG…QGFVLHFKEV (112 aa)) constitute a CUB 3 domain. A glycan (N-linked (GlcNAc...) asparagine) is linked at Asn-641. Sushi domains are found at residues 642–701 (DTCP…ACQK), 703–766 (MTCA…KCAL), and 769–830 (EPCL…LCKV). Disulfide bonds link Cys-644/Cys-686, Cys-672/Cys-699, Cys-705/Cys-747, Cys-733/Cys-764, Cys-771/Cys-813, and Cys-799/Cys-828. Residues 845–865 (LALAILLPLGLVIVLGSGVYI) traverse the membrane as a helical segment. At 866-910 (YYTKLQGKSLFGFSGSHSYSPITVESDFSNPLYEAGDTREYEVSI) the chain is on the cytoplasmic side.

Belongs to the SEZ6 family. In terms of processing, O-glycosylated with core 1 or possibly core 8 glycans.

It is found in the cell membrane. Its subcellular location is the endoplasmic reticulum membrane. May contribute to specialized endoplasmic reticulum functions in neurons. In Homo sapiens (Human), this protein is Seizure 6-like protein 2 (SEZ6L2).